Reading from the N-terminus, the 370-residue chain is Cysteine-type anaerobic sulfatase-maturating enzyme (370 aa).

The 227-residue stretch at 1–227 folds into the Radical SAM core domain; that stretch reads MPPLSLLIKP…LKNLFDFWYE (227 aa). Positions 15 and 19 each coordinate [4Fe-4S] cluster. S-adenosyl-L-methionine is bound at residue tyrosine 21. Cysteine 22 is a [4Fe-4S] cluster binding site. Residues glycine 66, serine 122, arginine 134, and leucine 195 each contribute to the S-adenosyl-L-methionine site. Residues cysteine 255, cysteine 261, and cysteine 276 each contribute to the [4Fe-4S] cluster site. Aspartate 277 acts as the Proton acceptor in catalysis. [4Fe-4S] cluster is bound by residues cysteine 317, cysteine 320, cysteine 326, cysteine 330, and cysteine 348.

It belongs to the radical SAM superfamily. Anaerobic sulfatase-maturating enzyme family. Monomer. It depends on [4Fe-4S] cluster as a cofactor.

The catalysed reaction is L-cysteinyl-[sulfatase] + S-adenosyl-L-methionine + H2O = 3-oxo-L-alanyl-[sulfatase] + hydrogen sulfide + 5'-deoxyadenosine + L-methionine + 2 H(+). It functions in the pathway protein modification; sulfatase oxidation. Involved in 'Cys-type' sulfatase maturation under anaerobic conditions. Catalyzes the post-translational modification of cysteine ('Cys-51' in the arylsulfatase CPF_0221) into 3-oxoalanine (also known as C(alpha)-formylglycine (FGly)), by a free radical chemical mechanism initiated via the reductive cleavage of S-adenosyl-L-methionine (SAM). Is also able to oxidize a serine residue in a synthetic substrate to FGly in vitro, and in a serine variant of a Cys-type sulfatase in vivo, but this activity is not physiological. Converts threonyl peptides to the corresponding ketone product, and also allo-threonyl peptides, but with a significantly reduced efficiency. The chain is Cysteine-type anaerobic sulfatase-maturating enzyme from Clostridium perfringens (strain ATCC 13124 / DSM 756 / JCM 1290 / NCIMB 6125 / NCTC 8237 / Type A).